Reading from the N-terminus, the 351-residue chain is DNA polymerase IV (351 aa).

In terms of domain architecture, UmuC spans 4-185 (IIHVDMDCFF…LPLAKIPGVG (182 aa)). Mg(2+) is bound by residues Asp8 and Asp103. Glu104 is an active-site residue.

This sequence belongs to the DNA polymerase type-Y family. Monomer. Mg(2+) serves as cofactor.

The protein localises to the cytoplasm. It carries out the reaction DNA(n) + a 2'-deoxyribonucleoside 5'-triphosphate = DNA(n+1) + diphosphate. Its function is as follows. Poorly processive, error-prone DNA polymerase involved in untargeted mutagenesis. Copies undamaged DNA at stalled replication forks, which arise in vivo from mismatched or misaligned primer ends. These misaligned primers can be extended by PolIV. Exhibits no 3'-5' exonuclease (proofreading) activity. May be involved in translesional synthesis, in conjunction with the beta clamp from PolIII. This Salmonella paratyphi B (strain ATCC BAA-1250 / SPB7) protein is DNA polymerase IV.